Consider the following 371-residue polypeptide: Queuine tRNA-ribosyltransferase (371 aa).

Catalysis depends on Asp90, which acts as the Proton acceptor. Residues 90–94, Asp144, Gln188, and Gly215 each bind substrate; that span reads DSGGF. The interval 246-252 is RNA binding; that stretch reads GVGTPED. Asp265 serves as the catalytic Nucleophile. An RNA binding; important for wobble base 34 recognition region spans residues 270–274; the sequence is TRNAR. Zn(2+) contacts are provided by Cys303, Cys305, Cys308, and His334.

Belongs to the queuine tRNA-ribosyltransferase family. As to quaternary structure, homodimer. Within each dimer, one monomer is responsible for RNA recognition and catalysis, while the other monomer binds to the replacement base PreQ1. It depends on Zn(2+) as a cofactor.

The enzyme catalyses 7-aminomethyl-7-carbaguanine + guanosine(34) in tRNA = 7-aminomethyl-7-carbaguanosine(34) in tRNA + guanine. It functions in the pathway tRNA modification; tRNA-queuosine biosynthesis. Its function is as follows. Catalyzes the base-exchange of a guanine (G) residue with the queuine precursor 7-aminomethyl-7-deazaguanine (PreQ1) at position 34 (anticodon wobble position) in tRNAs with GU(N) anticodons (tRNA-Asp, -Asn, -His and -Tyr). Catalysis occurs through a double-displacement mechanism. The nucleophile active site attacks the C1' of nucleotide 34 to detach the guanine base from the RNA, forming a covalent enzyme-RNA intermediate. The proton acceptor active site deprotonates the incoming PreQ1, allowing a nucleophilic attack on the C1' of the ribose to form the product. After dissociation, two additional enzymatic reactions on the tRNA convert PreQ1 to queuine (Q), resulting in the hypermodified nucleoside queuosine (7-(((4,5-cis-dihydroxy-2-cyclopenten-1-yl)amino)methyl)-7-deazaguanosine). The sequence is that of Queuine tRNA-ribosyltransferase from Neisseria meningitidis serogroup C (strain 053442).